The sequence spans 1463 residues: Clustered mitochondria protein homolog (1463 aa).

The interval 1–79 (MAKNKKQNGK…ETEQQQQQQE (79 aa)) is disordered. Positions 10-22 (KAKTPPVVAAAAG) are enriched in low complexity. One can recognise a Clu domain in the interval 374-616 (RAEDTFSSKL…RTFPPDVNFL (243 aa)). Disordered regions lie at residues 684 to 753 (AQKT…SEDA), 942 to 988 (GDGQ…SVPS), and 1387 to 1463 (QKEA…RRKS). Over residues 692–702 (KQAAIEAAAPA) the composition is skewed to low complexity. The segment covering 703-731 (EGDKTPAKDAKDGKEAGKDANDGKEEGST) has biased composition (basic and acidic residues). Basic residues predominate over residues 955–964 (GGKKQNKQSK). The segment covering 965 to 980 (RGGGGGGGKGAAGGGR) has biased composition (gly residues). Residues 1438–1456 (AEAASHTAGGAAANTAAPA) show a composition bias toward low complexity.

Belongs to the CLU family.

Its subcellular location is the cytoplasm. In terms of biological role, mRNA-binding protein involved in proper cytoplasmic distribution of mitochondria. This chain is Clustered mitochondria protein homolog, found in Anopheles gambiae (African malaria mosquito).